The primary structure comprises 257 residues: Ribonuclease HII (257 aa).

An RNase H type-2 domain is found at 72–257 (TYIAGIDEVG…FAPIKDMIQK (186 aa)). A divalent metal cation-binding residues include D78, E79, and D170.

This sequence belongs to the RNase HII family. Mn(2+) serves as cofactor. Mg(2+) is required as a cofactor.

It is found in the cytoplasm. The enzyme catalyses Endonucleolytic cleavage to 5'-phosphomonoester.. In terms of biological role, endonuclease that specifically degrades the RNA of RNA-DNA hybrids. The chain is Ribonuclease HII from Bacillus cereus (strain AH820).